Reading from the N-terminus, the 545-residue chain is ATP synthase subunit alpha (545 aa).

ATP is bound at residue 173–180 (GDRQTGKT).

Belongs to the ATPase alpha/beta chains family. In terms of assembly, F-type ATPases have 2 components, CF(1) - the catalytic core - and CF(0) - the membrane proton channel. CF(1) has five subunits: alpha(3), beta(3), gamma(1), delta(1), epsilon(1). CF(0) has three main subunits: a(1), b(2) and c(9-12). The alpha and beta chains form an alternating ring which encloses part of the gamma chain. CF(1) is attached to CF(0) by a central stalk formed by the gamma and epsilon chains, while a peripheral stalk is formed by the delta and b chains.

It is found in the cell membrane. It carries out the reaction ATP + H2O + 4 H(+)(in) = ADP + phosphate + 5 H(+)(out). Its function is as follows. Produces ATP from ADP in the presence of a proton gradient across the membrane. The alpha chain is a regulatory subunit. This is ATP synthase subunit alpha from Leifsonia xyli subsp. xyli (strain CTCB07).